Here is a 390-residue protein sequence, read N- to C-terminus: Putative glutamate--cysteine ligase 2 (390 aa).

The protein belongs to the glutamate--cysteine ligase type 2 family. YbdK subfamily.

It carries out the reaction L-cysteine + L-glutamate + ATP = gamma-L-glutamyl-L-cysteine + ADP + phosphate + H(+). Its function is as follows. ATP-dependent carboxylate-amine ligase which exhibits weak glutamate--cysteine ligase activity. The polypeptide is Putative glutamate--cysteine ligase 2 (Chloroflexus aurantiacus (strain ATCC 29366 / DSM 635 / J-10-fl)).